Here is a 146-residue protein sequence, read N- to C-terminus: uncharacterized protein (146 aa).

A helical transmembrane segment spans residues 7-24 (VIALFLVTGLTLYAIRLL).

Its subcellular location is the membrane. This is an uncharacterized protein from Haemophilus influenzae (strain ATCC 51907 / DSM 11121 / KW20 / Rd).